The primary structure comprises 414 residues: TAR DNA-binding protein 43 (414 aa).

Residues lysine 79, lysine 84, lysine 95, lysine 102, and lysine 181 each participate in a glycyl lysine isopeptide (Lys-Gly) (interchain with G-Cter in SUMO2) cross-link. RRM domains are found at residues 104 to 200 (SDLI…RCTE) and 191 to 262 (RKVF…NAEP). At serine 183 the chain carries Phosphoserine. The interval 216 to 414 (DVMDVFIPKP…MDSKSSGWGM (199 aa)) is interaction with UBQLN2. The span at 261–274 (EPKHNSNRQLERSG) shows a compositional bias: basic and acidic residues. 2 disordered regions span residues 261-303 (EPKH…GNNQ) and 341-373 (ASQQNQSGPSGNNQNQGNMQREPNQAFGSGNNS). Residue lysine 263 forms a Glycyl lysine isopeptide (Lys-Gly) (interchain with G-Cter in SUMO2) linkage. The span at 275–303 (RFGGNPGGFGNQGGFGNSRGGGAGLGNNQ) shows a compositional bias: gly residues. Serine 292 is modified (phosphoserine). Arginine 293 carries the post-translational modification Omega-N-methylarginine. Residues 342–358 (SQQNQSGPSGNNQNQGN) are compositionally biased toward low complexity.

As to quaternary structure, monomer and component of the SFPQ-NONO complex, which is probably a heterotetramer of two 52 kDa (NONO) and two 100 kDa (SFPQ) subunits. NONO is a component of spliceosome and U5.4/6 snRNP complexes. Interacts with CPNE4 (via VWFA domain). Forms heterodimers with PSPC1; this involves formation of a coiled coil domain by helices from both proteins. Part of complex consisting of SFPQ, NONO and MATR3. Part of a complex consisting of SFPQ, NONO and NR5A1. Part of a complex consisting of SFPQ, NONO and TOP1. Interacts with SPI1. Interacts with RNF43. Interacts with PER1 and PER2. Part of the HDP-RNP complex composed of at least HEXIM1, PRKDC, XRCC5, XRCC6, paraspeckle proteins (SFPQ, NONO, PSPC1, RBM14, and MATR3) and NEAT1 RNA. Interacts (via second RRM domain) with WASL; the interaction is direct. Component of a multiprotein complex with WASL and SFPQ. Interacts with ERCC6. Interacts (via DNA-binding domain) with TET1. In terms of processing, hyperphosphorylated. Post-translationally, ubiquitinated.

The protein localises to the nucleus. Its subcellular location is the nucleolus. It is found in the nucleus speckle. It localises to the chromosome. The protein resides in the mitochondrion. In terms of biological role, DNA- and RNA binding protein, involved in several nuclear processes. Binds the conventional octamer sequence in double-stranded DNA. Also binds single-stranded DNA and RNA at a site independent of the duplex site. Involved in pre-mRNA splicing, probably as a heterodimer with SFPQ. Interacts with U5 snRNA, probably by binding to a purine-rich sequence located on the 3' side of U5 snRNA stem 1b. Together with PSPC1, required for the formation of nuclear paraspeckles. The SFPQ-NONO heteromer associated with MATR3 may play a role in nuclear retention of defective RNAs. The SFPQ-NONO heteromer may be involved in DNA unwinding by modulating the function of topoisomerase I/TOP1. The SFPQ-NONO heteromer may be involved in DNA non-homologous end joining (NHEJ) required for double-strand break repair and V(D)J recombination and may stabilize paired DNA ends. In vitro, the complex strongly stimulates DNA end joining, binds directly to the DNA substrates and cooperates with the Ku70/G22P1-Ku80/XRCC5 (Ku) dimer to establish a functional preligation complex. NONO is involved in transcriptional regulation. The SFPQ-NONO-NR5A1 complex binds to the CYP17 promoter and regulates basal and cAMP-dependent transcriptional activity. NONO binds to an enhancer element in long terminal repeats of endogenous intracisternal A particles (IAPs) and activates transcription. Regulates the circadian clock by repressing the transcriptional activator activity of the CLOCK-BMAL1 heterodimer. Important for the functional organization of GABAergic synapses. Plays a specific and important role in the regulation of synaptic RNAs and GPHN/gephyrin scaffold structure, through the regulation of GABRA2 transcript. Plays a key role during neuronal differentiation by recruiting TET1 to genomic loci and thereby regulating 5-hydroxymethylcytosine levels. Plays a role in the regulation of DNA virus-mediated innate immune response by assembling into the HDP-RNP complex, a complex that serves as a platform for IRF3 phosphorylation and subsequent innate immune response activation through the cGAS-STING pathway. The chain is TAR DNA-binding protein 43 (TARDBP) from Pongo abelii (Sumatran orangutan).